A 121-amino-acid polypeptide reads, in one-letter code: Alpha-endosulfine (121 aa).

Residues 1–53 (MSQKQEEENPAEETGEEKQDTQEKEGILPERAEEAKLKAKYPSLGQKPGGSDF) are disordered. N-acetylserine is present on serine 2. Serine 2 bears the Phosphoserine mark. Basic and acidic residues predominate over residues 16 to 37 (EEKQDTQEKEGILPERAEEAKL). Threonine 21 is modified (phosphothreonine). Serine 43 carries the phosphoserine modification. Phosphoserine; by GWL is present on serine 67. Residues 79-121 (NKQLPSAGPDKNLVTGDHIPTPQDLPQRKSSLVTSKLAGGQVE) are disordered. Serine 109 is modified (phosphoserine; by PKA).

Belongs to the endosulfine family. Interacts (when phosphorylated at Ser-67) with PPP2R2D. Interacts with ABCC8. Interacts with SNCA; interaction is disrupted when phosphorylated at Ser-109. Post-translationally, phosphorylation at Ser-67 by GWL during mitosis is essential for interaction with PPP2R2D (PR55-delta) and subsequent inactivation of PP2A. Phosphorylated by PKA. In terms of tissue distribution, widely expressed with high levels in skeletal muscle and brain and lower levels in the pancreas.

It localises to the cytoplasm. Protein phosphatase inhibitor that specifically inhibits protein phosphatase 2A (PP2A) during mitosis. When phosphorylated at Ser-67 during mitosis, specifically interacts with PPP2R2D (PR55-delta) and inhibits its activity, leading to inactivation of PP2A, an essential condition to keep cyclin-B1-CDK1 activity high during M phase. Also acts as a stimulator of insulin secretion by interacting with sulfonylurea receptor (ABCC8), thereby preventing sulfonylurea from binding to its receptor and reducing K(ATP) channel currents. The chain is Alpha-endosulfine (ENSA) from Homo sapiens (Human).